The primary structure comprises 438 residues: ATP-dependent RNA helicase sub2 (438 aa).

Low complexity predominate over residues Thr-23 to Thr-36. Residues Thr-23 to Thr-42 form a disordered region. Positions Thr-58–Ile-86 match the Q motif motif. The 176-residue stretch at Ile-86 to Val-261 folds into the Helicase ATP-binding domain. An ATP-binding site is contributed by Ala-99–Thr-106. The short motif at Asp-208–Asp-211 is the DEAD box element. Positions Lys-289–Ser-434 constitute a Helicase C-terminal domain.

Belongs to the DEAD box helicase family. DECD subfamily.

It is found in the nucleus. It carries out the reaction ATP + H2O = ADP + phosphate + H(+). Functionally, ATP-binding RNA helicase involved in transcription elongation and required for the export of mRNA out of the nucleus. SUB2 also plays a role in pre-mRNA splicing and spliceosome assembly. May be involved in rDNA and telomeric silencing, and maintenance of genome integrity. This chain is ATP-dependent RNA helicase sub2 (sub2), found in Aspergillus terreus (strain NIH 2624 / FGSC A1156).